Consider the following 266-residue polypeptide: Large ribosomal subunit protein uL3 (266 aa).

Residues 124–149 form a disordered region; it reads NQKIGPKSHGGGGGSKPVRQTGSLGD.

Belongs to the universal ribosomal protein uL3 family. In terms of assembly, part of the 50S ribosomal subunit. Forms a cluster with proteins L14 and L19.

One of the primary rRNA binding proteins, it binds directly near the 3'-end of the 23S rRNA, where it nucleates assembly of the 50S subunit. In Mycoplasmopsis pulmonis (strain UAB CTIP) (Mycoplasma pulmonis), this protein is Large ribosomal subunit protein uL3.